Reading from the N-terminus, the 247-residue chain is Small ribosomal subunit protein uS3 (247 aa).

The KH type-2 domain maps to 18–87 (IDEYLAKRFY…NPQITVRRVE (70 aa)). Positions 226–247 (QQGEVVGEAPNTPLEEQGQKQG) are disordered.

Belongs to the universal ribosomal protein uS3 family. In terms of assembly, part of the 30S ribosomal subunit.

Its function is as follows. Binds the lower part of the 30S subunit head. The chain is Small ribosomal subunit protein uS3 from Hyperthermus butylicus (strain DSM 5456 / JCM 9403 / PLM1-5).